The chain runs to 586 residues: Eukaryotic translation initiation factor 3 subunit D (586 aa).

A disordered region spans residues 102-176; that stretch reads SAKRTFGRGG…DKPQRTREPS (75 aa). Over residues 162 to 174 the composition is skewed to basic and acidic residues; the sequence is GWKDYDKPQRTRE. The segment at 301–315 is RNA gate; it reads SLDLVTVNENAADAP. Residues 567–586 form a disordered region; that stretch reads EEEEEVAAEEQEAAEEEAEE.

The protein belongs to the eIF-3 subunit D family. As to quaternary structure, component of the eukaryotic translation initiation factor 3 (eIF-3) complex.

The protein resides in the cytoplasm. Its function is as follows. mRNA cap-binding component of the eukaryotic translation initiation factor 3 (eIF-3) complex, which is involved in protein synthesis of a specialized repertoire of mRNAs and, together with other initiation factors, stimulates binding of mRNA and methionyl-tRNAi to the 40S ribosome. The eIF-3 complex specifically targets and initiates translation of a subset of mRNAs involved in cell proliferation. In the eIF-3 complex, eif3d specifically recognizes and binds the 7-methylguanosine cap of a subset of mRNAs. The protein is Eukaryotic translation initiation factor 3 subunit D of Aspergillus niger (strain ATCC MYA-4892 / CBS 513.88 / FGSC A1513).